The following is a 158-amino-acid chain: NAD(P)H-quinone oxidoreductase subunit N (158 aa).

Belongs to the complex I NdhN subunit family. NDH-1 can be composed of about 15 different subunits; different subcomplexes with different compositions have been identified which probably have different functions.

The protein localises to the cellular thylakoid membrane. It carries out the reaction a plastoquinone + NADH + (n+1) H(+)(in) = a plastoquinol + NAD(+) + n H(+)(out). It catalyses the reaction a plastoquinone + NADPH + (n+1) H(+)(in) = a plastoquinol + NADP(+) + n H(+)(out). Functionally, NDH-1 shuttles electrons from an unknown electron donor, via FMN and iron-sulfur (Fe-S) centers, to quinones in the respiratory and/or the photosynthetic chain. The immediate electron acceptor for the enzyme in this species is believed to be plastoquinone. Couples the redox reaction to proton translocation, and thus conserves the redox energy in a proton gradient. Cyanobacterial NDH-1 also plays a role in inorganic carbon-concentration. The polypeptide is NAD(P)H-quinone oxidoreductase subunit N (Microcystis aeruginosa (strain NIES-843 / IAM M-2473)).